An 88-amino-acid polypeptide reads, in one-letter code: Selenoprotein W (88 aa).

The cysteinyl-selenocysteine (Cys-Sec); redox-active cross-link spans 10–13 (CGAU). Position 13 (selenocysteine 13) is a non-standard amino acid, selenocysteine. Cysteine 37 is subject to S-glutathionyl cysteine.

The protein belongs to the SelWTH family. Selenoprotein W subfamily. Interacts with DPYSL2, PRDX1, YWHAB, YWHAG, HSP70 and HSP90. In the embryo, expressed in the developing nervous system and in mesoderm-derived tissues such as heart and limbs. In the adult, predominantly expressed in brain, skeletal muscle and heart.

The protein resides in the cytoplasm. Plays a role as a glutathione (GSH)-dependent antioxidant. May be involved in a redox-related process. May play a role in the myopathies of selenium deficiency. The polypeptide is Selenoprotein W (Mus musculus (Mouse)).